Here is a 420-residue protein sequence, read N- to C-terminus: Histidine--tRNA ligase (420 aa).

The protein belongs to the class-II aminoacyl-tRNA synthetase family. In terms of assembly, homodimer.

The protein resides in the cytoplasm. It carries out the reaction tRNA(His) + L-histidine + ATP = L-histidyl-tRNA(His) + AMP + diphosphate + H(+). This is Histidine--tRNA ligase from Thermotoga petrophila (strain ATCC BAA-488 / DSM 13995 / JCM 10881 / RKU-1).